The following is a 62-amino-acid chain: Photosystem II reaction center protein Z (62 aa).

Helical transmembrane passes span Ala-8–Ala-28 and Phe-41–Ile-61.

This sequence belongs to the PsbZ family. In terms of assembly, PSII is composed of 1 copy each of membrane proteins PsbA, PsbB, PsbC, PsbD, PsbE, PsbF, PsbH, PsbI, PsbJ, PsbK, PsbL, PsbM, PsbT, PsbY, PsbZ, Psb30/Ycf12, at least 3 peripheral proteins of the oxygen-evolving complex and a large number of cofactors. It forms dimeric complexes.

It is found in the plastid. It localises to the chloroplast thylakoid membrane. In terms of biological role, may control the interaction of photosystem II (PSII) cores with the light-harvesting antenna, regulates electron flow through the 2 photosystem reaction centers. PSII is a light-driven water plastoquinone oxidoreductase, using light energy to abstract electrons from H(2)O, generating a proton gradient subsequently used for ATP formation. This is Photosystem II reaction center protein Z from Oenothera elata subsp. hookeri (Hooker's evening primrose).